The sequence spans 494 residues: MKGFLSLTLLPLLVAASPVAVNSIHNDAAPILSSMTSKDIPDSYIVVFKKHVDPSSASAHQSWLQEVHTAHTGRMELKKRSLFGFDFEAFMGLKHTFHIAGSLLGYAGHFHEDVIEQIRRHPDVDYIEKDSEVRTMSEGSVEKNAPWGLARISHRESLSFGNFNKYLYAEEGGEGVDAYVIDTGANVKHVDFEGRANWGKTIPQGDADEDGNGHGTHCSGTIAGKKFGVAKKANVYAVKVLRSNGSGTMSDVVKGVEWAAEAHIKKSKKGDKKFKGSVANMSLGGGSSRTLDLAVNAAVDAGIHFAVAAGNDNADACNYSPAAAEKAITVGASTLADERAYFSNYGKCTDIFAPGLNILSTWVGSDHATNTISGTSMASPHIAGLLAYYVSLAPAKDSAYAVADVTPKQLKAALISVATEGTLTDIPSDTPNLLAWNGGGSANYTKILADGGYKAHNAETTVEDRIGGIIDSAEKAFHKELGAIYSEIKDAVSA.

Residues 1–16 (MKGFLSLTLLPLLVAA) form the signal peptide. The propeptide at 17-136 (SPVAVNSIHN…IEKDSEVRTM (120 aa)) is removed in mature form. An Inhibitor I9 domain is found at 43-136 (SYIVVFKKHV…IEKDSEVRTM (94 aa)). One can recognise a Peptidase S8 domain in the interval 146–448 (PWGLARISHR…GGSANYTKIL (303 aa)). IgE-binding stretches follow at residues 180-198 (VIDT…RANW) and 209-231 (EDGN…GVAK). Residues Asp182 and His214 each act as charge relay system in the active site. 2 N-linked (GlcNAc...) asparagine glycosylation sites follow: Asn244 and Asn280. Ser376 (charge relay system) is an active-site residue. Asn443 carries an N-linked (GlcNAc...) asparagine glycan. The propeptide at 454–494 (KAHNAETTVEDRIGGIIDSAEKAFHKELGAIYSEIKDAVSA) is removed in mature form.

The protein belongs to the peptidase S8 family.

In terms of biological role, serine protease. The protein is Subtilisin-like serine protease EN45_078720 of Penicillium chrysogenum (Penicillium notatum).